A 417-amino-acid chain; its full sequence is Tyrosine--tRNA ligase (417 aa).

Tyr-39 lines the L-tyrosine pocket. A 'HIGH' region motif is present at residues 44 to 53 (CTAPSLHVGH). L-tyrosine-binding residues include Tyr-176 and Gln-180. A 'KMSKS' region motif is present at residues 236 to 240 (KMGKT). Residue Lys-239 participates in ATP binding. An S4 RNA-binding domain is found at 350–417 (AGVLALFVKA…KKRHVLLRPA (68 aa)).

Belongs to the class-I aminoacyl-tRNA synthetase family. TyrS type 1 subfamily. Homodimer.

The protein localises to the cytoplasm. The enzyme catalyses tRNA(Tyr) + L-tyrosine + ATP = L-tyrosyl-tRNA(Tyr) + AMP + diphosphate + H(+). Functionally, catalyzes the attachment of tyrosine to tRNA(Tyr) in a two-step reaction: tyrosine is first activated by ATP to form Tyr-AMP and then transferred to the acceptor end of tRNA(Tyr). The polypeptide is Tyrosine--tRNA ligase (Nitrobacter winogradskyi (strain ATCC 25391 / DSM 10237 / CIP 104748 / NCIMB 11846 / Nb-255)).